Here is a 158-residue protein sequence, read N- to C-terminus: Transcription elongation factor GreA (158 aa).

The stretch at glutamate 53–glutamine 73 forms a coiled coil.

Belongs to the GreA/GreB family.

Functionally, necessary for efficient RNA polymerase transcription elongation past template-encoded arresting sites. The arresting sites in DNA have the property of trapping a certain fraction of elongating RNA polymerases that pass through, resulting in locked ternary complexes. Cleavage of the nascent transcript by cleavage factors such as GreA or GreB allows the resumption of elongation from the new 3'terminus. GreA releases sequences of 2 to 3 nucleotides. This chain is Transcription elongation factor GreA, found in Halorhodospira halophila (strain DSM 244 / SL1) (Ectothiorhodospira halophila (strain DSM 244 / SL1)).